A 694-amino-acid polypeptide reads, in one-letter code: Elongation factor G (694 aa).

In terms of domain architecture, tr-type G spans 10–285 (EKTRNIGIMA…GVVDYLPSPL (276 aa)). Residues 19 to 26 (AHIDAGKT), 83 to 87 (DTPGH), and 137 to 140 (NKMD) each bind GTP.

It belongs to the TRAFAC class translation factor GTPase superfamily. Classic translation factor GTPase family. EF-G/EF-2 subfamily.

It is found in the cytoplasm. Functionally, catalyzes the GTP-dependent ribosomal translocation step during translation elongation. During this step, the ribosome changes from the pre-translocational (PRE) to the post-translocational (POST) state as the newly formed A-site-bound peptidyl-tRNA and P-site-bound deacylated tRNA move to the P and E sites, respectively. Catalyzes the coordinated movement of the two tRNA molecules, the mRNA and conformational changes in the ribosome. This chain is Elongation factor G, found in Lactobacillus delbrueckii subsp. bulgaricus (strain ATCC 11842 / DSM 20081 / BCRC 10696 / JCM 1002 / NBRC 13953 / NCIMB 11778 / NCTC 12712 / WDCM 00102 / Lb 14).